The primary structure comprises 433 residues: Serine hydroxymethyltransferase (433 aa).

Residues L127 and 131–133 each bind (6S)-5,6,7,8-tetrahydrofolate; that span reads GHL. K236 is subject to N6-(pyridoxal phosphate)lysine.

The protein belongs to the SHMT family. Homodimer. It depends on pyridoxal 5'-phosphate as a cofactor.

The protein resides in the cytoplasm. It catalyses the reaction (6R)-5,10-methylene-5,6,7,8-tetrahydrofolate + glycine + H2O = (6S)-5,6,7,8-tetrahydrofolate + L-serine. Its pathway is one-carbon metabolism; tetrahydrofolate interconversion. The protein operates within amino-acid biosynthesis; glycine biosynthesis; glycine from L-serine: step 1/1. Catalyzes the reversible interconversion of serine and glycine with tetrahydrofolate (THF) serving as the one-carbon carrier. This reaction serves as the major source of one-carbon groups required for the biosynthesis of purines, thymidylate, methionine, and other important biomolecules. Also exhibits THF-independent aldolase activity toward beta-hydroxyamino acids, producing glycine and aldehydes, via a retro-aldol mechanism. The protein is Serine hydroxymethyltransferase of Corynebacterium urealyticum (strain ATCC 43042 / DSM 7109).